The primary structure comprises 295 residues: Inorganic pyrophosphatase 1 (295 aa).

D19 functions as the Nucleophile in the catalytic mechanism. Residues D19 and D21 each coordinate Mg(2+). D21 acts as the Proton donor in catalysis. 2 residues coordinate substrate: D30 and D105. D190 contacts Mg(2+).

The protein belongs to the HAD-like hydrolase superfamily. As to quaternary structure, tetramer. Mg(2+) is required as a cofactor. Requires Fe(2+) as cofactor. The cofactor is Ni(2+). It depends on Co(2+) as a cofactor. Mn(2+) serves as cofactor.

The enzyme catalyses diphosphate + H2O = 2 phosphate + H(+). Catalyzes the specific cleavage of pyrophosphate. In Arabidopsis thaliana (Mouse-ear cress), this protein is Inorganic pyrophosphatase 1 (PS2).